The chain runs to 282 residues: Bifunctional protein FolD (282 aa).

NADP(+) is bound by residues 164-166 (GRS) and serine 189.

Belongs to the tetrahydrofolate dehydrogenase/cyclohydrolase family. In terms of assembly, homodimer.

It catalyses the reaction (6R)-5,10-methylene-5,6,7,8-tetrahydrofolate + NADP(+) = (6R)-5,10-methenyltetrahydrofolate + NADPH. It carries out the reaction (6R)-5,10-methenyltetrahydrofolate + H2O = (6R)-10-formyltetrahydrofolate + H(+). It participates in one-carbon metabolism; tetrahydrofolate interconversion. Catalyzes the oxidation of 5,10-methylenetetrahydrofolate to 5,10-methenyltetrahydrofolate and then the hydrolysis of 5,10-methenyltetrahydrofolate to 10-formyltetrahydrofolate. In Lactobacillus helveticus (strain DPC 4571), this protein is Bifunctional protein FolD.